The sequence spans 280 residues: uncharacterized protein (280 aa).

An N-terminal signal peptide occupies residues 1–35 (MQGQVLKKVLKKYVHIGMCTLFLHAILLFPCVAQA).

This is an uncharacterized protein from Treponema pallidum (strain Nichols).